We begin with the raw amino-acid sequence, 136 residues long: uncharacterized protein (136 aa).

A helical transmembrane segment spans residues 14 to 34 (ASVFAFFVLFLFCLKIILVLF).

The protein resides in the membrane. This is an uncharacterized protein from Mycoplasma genitalium (strain ATCC 33530 / DSM 19775 / NCTC 10195 / G37) (Mycoplasmoides genitalium).